A 308-amino-acid polypeptide reads, in one-letter code: Cilia- and flagella-associated protein 73 (308 aa).

Coiled coils occupy residues 34-143 and 175-233; these read RLLE…LEPC and AALR…WESK.

This sequence belongs to the CFAP73 family.

It localises to the cytoplasm. The protein localises to the cytoskeleton. It is found in the cilium axoneme. In terms of biological role, may play a role in ciliary/flagellar motility by regulating the assembly and the activity of axonemal inner dynein arm. The polypeptide is Cilia- and flagella-associated protein 73 (Homo sapiens (Human)).